Reading from the N-terminus, the 341-residue chain is Phenylalanine--tRNA ligase alpha subunit (341 aa).

Glutamate 254 contacts Mg(2+).

It belongs to the class-II aminoacyl-tRNA synthetase family. Phe-tRNA synthetase alpha subunit type 1 subfamily. As to quaternary structure, tetramer of two alpha and two beta subunits. Requires Mg(2+) as cofactor.

The protein resides in the cytoplasm. It carries out the reaction tRNA(Phe) + L-phenylalanine + ATP = L-phenylalanyl-tRNA(Phe) + AMP + diphosphate + H(+). This is Phenylalanine--tRNA ligase alpha subunit from Chlorobaculum parvum (strain DSM 263 / NCIMB 8327) (Chlorobium vibrioforme subsp. thiosulfatophilum).